A 107-amino-acid chain; its full sequence is uncharacterized protein (107 aa).

Its subcellular location is the mitochondrion. This is an uncharacterized protein from Arabidopsis thaliana (Mouse-ear cress).